The primary structure comprises 631 residues: 1-deoxy-D-xylulose-5-phosphate synthase (631 aa).

Residues His87 and 128–130 each bind thiamine diphosphate; that span reads GHS. Asp159 contributes to the Mg(2+) binding site. Residues 160-161, Asn188, Phe295, and Glu377 each bind thiamine diphosphate; that span reads GA. Position 188 (Asn188) interacts with Mg(2+).

This sequence belongs to the transketolase family. DXPS subfamily. As to quaternary structure, homodimer. Mg(2+) serves as cofactor. The cofactor is thiamine diphosphate.

It catalyses the reaction D-glyceraldehyde 3-phosphate + pyruvate + H(+) = 1-deoxy-D-xylulose 5-phosphate + CO2. The protein operates within metabolic intermediate biosynthesis; 1-deoxy-D-xylulose 5-phosphate biosynthesis; 1-deoxy-D-xylulose 5-phosphate from D-glyceraldehyde 3-phosphate and pyruvate: step 1/1. Functionally, catalyzes the acyloin condensation reaction between C atoms 2 and 3 of pyruvate and glyceraldehyde 3-phosphate to yield 1-deoxy-D-xylulose-5-phosphate (DXP). The polypeptide is 1-deoxy-D-xylulose-5-phosphate synthase (Pseudomonas putida (strain ATCC 700007 / DSM 6899 / JCM 31910 / BCRC 17059 / LMG 24140 / F1)).